A 137-amino-acid polypeptide reads, in one-letter code: Large ribosomal subunit protein uL16 (137 aa).

Positions 1–16 (MLQPKRTKFRKVHTGR) are enriched in basic residues. The interval 1–22 (MLQPKRTKFRKVHTGRNRGLAQ) is disordered.

The protein belongs to the universal ribosomal protein uL16 family. Part of the 50S ribosomal subunit.

Binds 23S rRNA and is also seen to make contacts with the A and possibly P site tRNAs. In Idiomarina loihiensis (strain ATCC BAA-735 / DSM 15497 / L2-TR), this protein is Large ribosomal subunit protein uL16.